A 512-amino-acid chain; its full sequence is Retinaldehyde dehydrogenase 3 (512 aa).

The interval 1 to 22 (MATTNGAVENGQPDGKPPALPR) is disordered. N-acetylalanine is present on A2. Residues K204, E207, and 257–262 (GSTEVG) each bind NAD(+). Catalysis depends on E280, which acts as the Proton acceptor. C314 functions as the Nucleophile in the catalytic mechanism. The NAD(+) site is built by Q361 and E411.

This sequence belongs to the aldehyde dehydrogenase family. As to quaternary structure, homotetramer. As to expression, detected in embryonic head (at protein level). Ventral retina.

Its subcellular location is the cytoplasm. The enzyme catalyses retinal + NAD(+) + H2O = retinoate + NADH + 2 H(+). It carries out the reaction all-trans-retinal + NAD(+) + H2O = all-trans-retinoate + NADH + 2 H(+). It catalyses the reaction all-trans-13,14-dihydroretinal + NAD(+) + H2O = all-trans-13,14-dihydroretinoate + NADH + 2 H(+). The protein operates within cofactor metabolism; retinol metabolism. Its function is as follows. Catalyzes the NAD-dependent oxidation of aldehyde substrates, such as all-trans-retinal and all-trans-13,14-dihydroretinal, to their corresponding carboxylic acids, all-trans-retinoate and all-trans-13,14-dihydroretinoate, respectively. High specificity for all-trans-retinal as substrate, can also accept acetaldehyde as substrate in vitro but with lower affinity. Required for the biosynthesis of normal levels of retinoate in the embryonic ocular and nasal regions; a critical lipid in the embryonic development of the eye and the nasal region. This chain is Retinaldehyde dehydrogenase 3 (Aldh1a3), found in Mus musculus (Mouse).